We begin with the raw amino-acid sequence, 142 residues long: Putative phosphatidylglycerol/phosphatidylinositol transfer protein 2 (142 aa).

A signal peptide spans 1–20 (MKFYLYLSILLILLTSTSFG).

It belongs to the NPC2 family. In terms of assembly, monomer.

Its function is as follows. Catalyzes the intermembrane transfer of phosphatidylglycerol and phosphatidylinositol. The polypeptide is Putative phosphatidylglycerol/phosphatidylinositol transfer protein 2 (Dictyostelium discoideum (Social amoeba)).